The primary structure comprises 900 residues: DNA mismatch repair protein MutS (900 aa).

637–644 is an ATP binding site; that stretch reads GPNMAGKS.

The protein belongs to the DNA mismatch repair MutS family.

Functionally, this protein is involved in the repair of mismatches in DNA. It is possible that it carries out the mismatch recognition step. This protein has a weak ATPase activity. The sequence is that of DNA mismatch repair protein MutS from Methanosarcina acetivorans (strain ATCC 35395 / DSM 2834 / JCM 12185 / C2A).